The chain runs to 147 residues: Methylglyoxal synthase (147 aa).

An MGS-like domain is found at V4 to S147. Residues H17, K21, T43–T46, and S63–G64 each bind substrate. Residue D69 is the Proton donor/acceptor of the active site. Residue H96 participates in substrate binding.

Belongs to the methylglyoxal synthase family.

The catalysed reaction is dihydroxyacetone phosphate = methylglyoxal + phosphate. Functionally, catalyzes the formation of methylglyoxal from dihydroxyacetone phosphate. In Leptospira borgpetersenii serovar Hardjo-bovis (strain JB197), this protein is Methylglyoxal synthase.